A 486-amino-acid chain; its full sequence is MISLDTLSLFLSINENDLVEELVMTLLASPQLAVFFEKFPVLKNVLTRDLPRHKADILQQLKSTAVPPLLEAEFQRFQQYQALSLRDFNAGLPDLLAWLAHQASPFNEKAQALIANNDTQQCNSAQQTLFLQRWRLSLTLQTLTLNQQLLDKEREKLLAELQQRLAMSGQLAPVLADDDEAAAGRLWDLTRGELQRDDYQLIVQYGDFLASQPELLKLAQRLGRSREAKPVPSDDAPAEIFHQPVREPASVPEEVNGLHQSDDILRLLPPELATLGISELEIEFYRRLVEKRLLTYRLQGESWHDHITQRPVAHQHHDPQQRGPFIVCVDTSGSMGGFNERCAKAFCLALLKVALAEKRRCYIMLFAHQVISYELTAGDGISQAIRFLSQRFRGGTDLAACLEAVLVKLSDVQWHDADAVVLSDFIAQRLPDALITRVRTHQEQQRQRFHAVAMSDHGKPGIMRIFNHIWRFDTGLKSRLLRRWKR.

Belongs to the ViaA family. In terms of assembly, homodimer. Interacts with RavA.

The protein resides in the cytoplasm. Component of the RavA-ViaA chaperone complex, which may act on the membrane to optimize the function of some of the respiratory chains. ViaA stimulates the ATPase activity of RavA. This Erwinia tasmaniensis (strain DSM 17950 / CFBP 7177 / CIP 109463 / NCPPB 4357 / Et1/99) protein is Regulatory protein ViaA.